A 22-amino-acid polypeptide reads, in one-letter code: Dioicin-1 (22 aa).

Its subcellular location is the secreted. The protein resides in the extracellular space. It is found in the golgi apparatus. The protein localises to the vacuole. It catalyses the reaction Endohydrolysis of the N-glycosidic bond at one specific adenosine on the 28S rRNA.. Functionally, nicks pBR322 dsDNA. Has adenine polynucleotide glycosidase activity on herring sperm ssDNA. The chain is Dioicin-1 from Phytolacca dioica (Bella sombra tree).